The chain runs to 269 residues: GTP cyclohydrolase FolE2 (269 aa).

The protein belongs to the GTP cyclohydrolase IV family.

The enzyme catalyses GTP + H2O = 7,8-dihydroneopterin 3'-triphosphate + formate + H(+). Its pathway is cofactor biosynthesis; 7,8-dihydroneopterin triphosphate biosynthesis; 7,8-dihydroneopterin triphosphate from GTP: step 1/1. In terms of biological role, converts GTP to 7,8-dihydroneopterin triphosphate. This is GTP cyclohydrolase FolE2 from Burkholderia multivorans (strain ATCC 17616 / 249).